The following is a 237-amino-acid chain: Pyridoxal 5'-phosphate synthase subunit PdxS (237 aa).

Residue lysine 19 is the Schiff-base intermediate with D-ribose 5-phosphate of the active site. Glycine 91 contacts D-ribose 5-phosphate. Arginine 103 lines the D-glyceraldehyde 3-phosphate pocket. D-ribose 5-phosphate is bound by residues glycine 157 and 178-179 (GS).

This sequence belongs to the PdxS/SNZ family. In terms of assembly, in the presence of PdxT, forms a dodecamer of heterodimers.

It catalyses the reaction aldehydo-D-ribose 5-phosphate + D-glyceraldehyde 3-phosphate + L-glutamine = pyridoxal 5'-phosphate + L-glutamate + phosphate + 3 H2O + H(+). Its pathway is cofactor biosynthesis; pyridoxal 5'-phosphate biosynthesis. Functionally, catalyzes the formation of pyridoxal 5'-phosphate from ribose 5-phosphate (RBP), glyceraldehyde 3-phosphate (G3P) and ammonia. The ammonia is provided by the PdxT subunit. Can also use ribulose 5-phosphate and dihydroxyacetone phosphate as substrates, resulting from enzyme-catalyzed isomerization of RBP and G3P, respectively. In Methanococcus vannielii, this protein is Pyridoxal 5'-phosphate synthase subunit PdxS.